The following is a 164-amino-acid chain: 6,7-dimethyl-8-ribityllumazine synthase (164 aa).

Residues Phe-22, 56-58 (AWE), and 80-82 (AVI) each bind 5-amino-6-(D-ribitylamino)uracil. 85–86 (DT) is a binding site for (2S)-2-hydroxy-3-oxobutyl phosphate. His-88 (proton donor) is an active-site residue. Leu-113 is a 5-amino-6-(D-ribitylamino)uracil binding site. Arg-127 lines the (2S)-2-hydroxy-3-oxobutyl phosphate pocket.

The protein belongs to the DMRL synthase family.

The catalysed reaction is (2S)-2-hydroxy-3-oxobutyl phosphate + 5-amino-6-(D-ribitylamino)uracil = 6,7-dimethyl-8-(1-D-ribityl)lumazine + phosphate + 2 H2O + H(+). It functions in the pathway cofactor biosynthesis; riboflavin biosynthesis; riboflavin from 2-hydroxy-3-oxobutyl phosphate and 5-amino-6-(D-ribitylamino)uracil: step 1/2. Catalyzes the formation of 6,7-dimethyl-8-ribityllumazine by condensation of 5-amino-6-(D-ribitylamino)uracil with 3,4-dihydroxy-2-butanone 4-phosphate. This is the penultimate step in the biosynthesis of riboflavin. In Gemmatimonas aurantiaca (strain DSM 14586 / JCM 11422 / NBRC 100505 / T-27), this protein is 6,7-dimethyl-8-ribityllumazine synthase.